Consider the following 392-residue polypeptide: Formate-dependent phosphoribosylglycinamide formyltransferase (392 aa).

N(1)-(5-phospho-beta-D-ribosyl)glycinamide contacts are provided by residues 22 to 23 (EL) and Glu-82. Residues Arg-114, Lys-155, 160-165 (SSGKGQ), 195-198 (EGEV), and Glu-203 each bind ATP. The 190-residue stretch at 119–308 (RLAAETLALP…EFALHVRAFL (190 aa)) folds into the ATP-grasp domain. Mg(2+) contacts are provided by Glu-267 and Glu-279. N(1)-(5-phospho-beta-D-ribosyl)glycinamide-binding positions include Asp-286, Lys-355, and 362-363 (RR).

It belongs to the PurK/PurT family. As to quaternary structure, homodimer.

The enzyme catalyses N(1)-(5-phospho-beta-D-ribosyl)glycinamide + formate + ATP = N(2)-formyl-N(1)-(5-phospho-beta-D-ribosyl)glycinamide + ADP + phosphate + H(+). It participates in purine metabolism; IMP biosynthesis via de novo pathway; N(2)-formyl-N(1)-(5-phospho-D-ribosyl)glycinamide from N(1)-(5-phospho-D-ribosyl)glycinamide (formate route): step 1/1. In terms of biological role, involved in the de novo purine biosynthesis. Catalyzes the transfer of formate to 5-phospho-ribosyl-glycinamide (GAR), producing 5-phospho-ribosyl-N-formylglycinamide (FGAR). Formate is provided by PurU via hydrolysis of 10-formyl-tetrahydrofolate. The chain is Formate-dependent phosphoribosylglycinamide formyltransferase from Edwardsiella ictaluri (strain 93-146).